The chain runs to 35 residues: Photosystem II reaction center protein M (35 aa).

Residues 5 to 25 (ILAVIATALFIIIPTSFLLIL) form a helical membrane-spanning segment.

Belongs to the PsbM family. PSII is composed of 1 copy each of membrane proteins PsbA, PsbB, PsbC, PsbD, PsbE, PsbF, PsbH, PsbI, PsbJ, PsbK, PsbL, PsbM, PsbT, PsbX, PsbY, PsbZ, Psb30/Ycf12, at least 3 peripheral proteins of the oxygen-evolving complex and a large number of cofactors. It forms dimeric complexes.

It is found in the plastid. Its subcellular location is the chloroplast thylakoid membrane. One of the components of the core complex of photosystem II (PSII). PSII is a light-driven water:plastoquinone oxidoreductase that uses light energy to abstract electrons from H(2)O, generating O(2) and a proton gradient subsequently used for ATP formation. It consists of a core antenna complex that captures photons, and an electron transfer chain that converts photonic excitation into a charge separation. This subunit is found at the monomer-monomer interface. This is Photosystem II reaction center protein M from Staurastrum punctulatum (Green alga).